We begin with the raw amino-acid sequence, 197 residues long: Phosphoheptose isomerase (197 aa).

An SIS domain is found at 36 to 197 (MVNALLNEGK…IDSQLFGSEE (162 aa)). 51 to 53 (NGG) contributes to the substrate binding site. H60 and E64 together coordinate Zn(2+). Residues E64, 93–94 (ND), 119–121 (STS), S124, and Q174 contribute to the substrate site. Q174 and H182 together coordinate Zn(2+).

The protein belongs to the SIS family. GmhA subfamily. In terms of assembly, homotetramer. It depends on Zn(2+) as a cofactor.

The protein resides in the cytoplasm. It carries out the reaction 2 D-sedoheptulose 7-phosphate = D-glycero-alpha-D-manno-heptose 7-phosphate + D-glycero-beta-D-manno-heptose 7-phosphate. The protein operates within carbohydrate biosynthesis; D-glycero-D-manno-heptose 7-phosphate biosynthesis; D-glycero-alpha-D-manno-heptose 7-phosphate and D-glycero-beta-D-manno-heptose 7-phosphate from sedoheptulose 7-phosphate: step 1/1. Catalyzes the isomerization of sedoheptulose 7-phosphate in D-glycero-D-manno-heptose 7-phosphate. This Pseudomonas fluorescens (strain SBW25) protein is Phosphoheptose isomerase.